The chain runs to 464 residues: Chaperone SurA (464 aa).

Residues 1 to 25 (MTRYFSIVLSLLLAVSCVFLPVASA) form the signal peptide. 2 PpiC domains span residues 175–277 (GAQY…KLVE) and 292–391 (ATEY…QRLG). The disordered stretch occupies residues 439 to 464 (PADDHQTPSAAVIPATGAVLPSATKH).

It is found in the periplasm. The catalysed reaction is [protein]-peptidylproline (omega=180) = [protein]-peptidylproline (omega=0). Its function is as follows. Chaperone involved in the correct folding and assembly of outer membrane proteins. Recognizes specific patterns of aromatic residues and the orientation of their side chains, which are found more frequently in integral outer membrane proteins. May act in both early periplasmic and late outer membrane-associated steps of protein maturation. The sequence is that of Chaperone SurA from Xylella fastidiosa (strain 9a5c).